The primary structure comprises 150 residues: CCAAT/enhancer-binding protein gamma (150 aa).

Lys3 is covalently cross-linked (Glycyl lysine isopeptide (Lys-Gly) (interchain with G-Cter in SUMO2)). Residues 27-94 form a disordered region; that stretch reads GLQQVPQLVP…QKAQDTLQRV (68 aa). Over residues 28–37 the composition is skewed to low complexity; it reads LQQVPQLVPA. Residues 56-72 are compositionally biased toward basic and acidic residues; it reads SPMDRNSDEYRQRRERN. Positions 62-125 constitute a bZIP domain; sequence SDEYRQRRER…SVLKDLFLEH (64 aa). Residues 66 to 93 form a basic motif region; it reads RQRRERNNMAVKKSRLKSKQKAQDTLQR. A leucine-zipper region spans residues 97-118; the sequence is LKEENERLEAKIKLLTKELSVL.

The protein belongs to the bZIP family. C/EBP subfamily. As to quaternary structure, binds DNA as a dimer and can form stable heterodimers with CEBPA and CEBPB. Interacts with ZNF638; this interaction increases transcriptional activation.

The protein resides in the nucleus. Its function is as follows. Transcription factor that binds to the promoter and the enhancer regions of target genes. Binds to the enhancer element PRE-I (positive regulatory element-I) of the IL-4 gene. Binds to the promoter and the enhancer of the immunoglobulin heavy chain. Binds to GPE1, a cis-acting element in the G-CSF gene promoter. This chain is CCAAT/enhancer-binding protein gamma (CEBPG), found in Homo sapiens (Human).